Consider the following 246-residue polypeptide: Sulfate transporter CysZ (246 aa).

4 consecutive transmembrane segments (helical) span residues 24–44 (LFVLIPLTLNLLVFALLIGFA), 69–89 (IVWPLFVLLVLVIVFFTFTMV), 148–168 (LLVLSFVPGVNLIATPLWILF), and 214–234 (LLIPLVNLVMMPAAVAGATLF).

The protein belongs to the CysZ family.

The protein localises to the cell inner membrane. In terms of biological role, high affinity, high specificity proton-dependent sulfate transporter, which mediates sulfate uptake. Provides the sulfur source for the cysteine synthesis pathway. This Pseudomonas aeruginosa (strain LESB58) protein is Sulfate transporter CysZ.